Here is a 79-residue protein sequence, read N- to C-terminus: D-alanyl carrier protein (79 aa).

The region spanning 1–77 (MSIEETVIEL…KIVQGVEELQ (77 aa)) is the Carrier domain. The residue at position 35 (S35) is an O-(pantetheine 4'-phosphoryl)serine.

This sequence belongs to the DltC family. 4'-phosphopantetheine is transferred from CoA to a specific serine of apo-DCP.

It is found in the cytoplasm. It participates in cell wall biogenesis; lipoteichoic acid biosynthesis. In terms of biological role, carrier protein involved in the D-alanylation of lipoteichoic acid (LTA). The loading of thioester-linked D-alanine onto DltC is catalyzed by D-alanine--D-alanyl carrier protein ligase DltA. The DltC-carried D-alanyl group is further transferred to cell membrane phosphatidylglycerol (PG) by forming an ester bond, probably catalyzed by DltD. D-alanylation of LTA plays an important role in modulating the properties of the cell wall in Gram-positive bacteria, influencing the net charge of the cell wall. In Streptococcus pyogenes serotype M1, this protein is D-alanyl carrier protein.